Here is a 473-residue protein sequence, read N- to C-terminus: H(+)/Cl(-) exchange transporter ClcA (473 aa).

The Cytoplasmic portion of the chain corresponds to 1–32; that stretch reads MKTDTSTFLAQQIVRLRRRDQIRRLMQRDKTP. The helical transmembrane segment at 33–69 threads the bilayer; sequence LAILFMAAVVGTLTGLVGVAFEKAVSWVQNMRIGALV. Residues 70 to 76 are Periplasmic-facing; the sequence is QVADHAF. Residues 77-100 traverse the membrane as a helical segment; that stretch reads LLWPLAFILSALLAMVGYFLVRKF. The short motif at 106 to 110 is the Selectivity filter part_1 element; that stretch reads GSGIP. S107 contributes to the chloride binding site. Positions 109–116 form an intramembrane region, helical; sequence IPEIEGAL. Topologically, residues 117–123 are cytoplasmic; that stretch reads EELRPVR. A run of 2 helical transmembrane segments spans residues 124 to 141 and 148 to 166; these read WWRVLPVKFIGGMGTLGA and EGPTVQIGGNLGRMVLDVF. The Selectivity filter part_2 motif lies at 146-150; the sequence is GREGP. The Cytoplasmic portion of the chain corresponds to 167-176; sequence RMRSAEARHT. Intramembrane regions (helical) lie at residues 177–189 and 193–201; these read LLATGAAAGLSAA and PLAGILFII. Residues 202–214 lie on the Cytoplasmic side of the membrane; it reads EEMRPQFRYNLIS. The chain crosses the membrane as a helical span at residues 215-232; it reads IKAVFTGVIMSSIVFRIF. At 233–252 the chain is on the periplasmic side; it reads NGEAPIIEVGKLSDAPVNTL. The helical transmembrane segment at 253–281 threads the bilayer; sequence WLYLILGIIFGCVGPVFNSLVLRTQDMFQ. The Cytoplasmic portion of the chain corresponds to 282 to 287; the sequence is RFHGGE. Residues 288 to 309 form a helical membrane-spanning segment; that stretch reads IKKWVLMGGAIGGLCGILGLIE. Topologically, residues 310–329 are periplasmic; it reads PEAAGGGFNLIPIAAAGNFS. A run of 2 helical transmembrane segments spans residues 330 to 349 and 355 to 376; these read VGLLLFIFITRVVTTLLCFS and GIFAPMLALGTLLGTAFGMAAA. Residues 355–359 carry the Selectivity filter part_3 motif; the sequence is GIFAP. The chloride site is built by I356 and F357. Over 377 to 386 the chain is Periplasmic; that stretch reads VLFPQYHLEA. The segment at residues 387 to 401 is an intramembrane region (helical); the sequence is GTFAIAGMGALMAAS. An intramembrane region (note=Loop between two helices) is located at residues 402-404; it reads VRA. Positions 405–416 form an intramembrane region, helical; that stretch reads PLTGIVLVLEMT. The note=Loop between two helices intramembrane region spans 417–421; sequence DNYQL. A helical transmembrane segment spans residues 422-438; that stretch reads ILPMIITCLGATLLAQF. At 439–473 the chain is on the cytoplasmic side; that stretch reads LGGKPLYSTILARTLAKQDAEQAAKNQNASAGENT. Y445 contributes to the chloride binding site.

The protein belongs to the chloride channel (TC 2.A.49) family. ClcA subfamily. As to quaternary structure, homodimer.

The protein localises to the cell inner membrane. The catalysed reaction is 2 chloride(in) + H(+)(out) = 2 chloride(out) + H(+)(in). Proton-coupled chloride transporter. Functions as antiport system and exchanges two chloride ions for 1 proton. Probably acts as an electrical shunt for an outwardly-directed proton pump that is linked to amino acid decarboxylation, as part of the extreme acid resistance (XAR) response. The chain is H(+)/Cl(-) exchange transporter ClcA from Salmonella choleraesuis (strain SC-B67).